Here is a 230-residue protein sequence, read N- to C-terminus: Ephrin-A3 (230 aa).

Residues 1–22 (MAAAPLLLLLLLVPVPLLPLLA) form the signal peptide. The Ephrin RBD domain occupies 30–161 (GNRHAVYWNS…RMKVFVCCAS (132 aa)). Residues Asn38, Asn67, Asn84, and Asn92 are each glycosylated (N-linked (GlcNAc...) asparagine). Cystine bridges form between Cys63/Cys102 and Cys91/Cys150. A lipid anchor (GPI-anchor amidated glycine) is attached at Gly206. Positions 207 to 230 (TSPKREHLPLAVGIAFFLMTLLAS) are cleaved as a propeptide — removed in mature form.

The protein belongs to the ephrin family. In terms of assembly, interacts with EPHA8; activates EPHA8. As to expression, expressed in myogenic progenitor cells.

The protein localises to the cell membrane. Cell surface GPI-bound ligand for Eph receptors, a family of receptor tyrosine kinases which are crucial for migration, repulsion and adhesion during neuronal, vascular and epithelial development. Binds promiscuously Eph receptors residing on adjacent cells, leading to contact-dependent bidirectional signaling into neighboring cells. The signaling pathway downstream of the receptor is referred to as forward signaling while the signaling pathway downstream of the ephrin ligand is referred to as reverse signaling. This Mus musculus (Mouse) protein is Ephrin-A3 (Efna3).